A 101-amino-acid chain; its full sequence is Small ribosomal subunit protein bS6 (101 aa).

It belongs to the bacterial ribosomal protein bS6 family.

In terms of biological role, binds together with bS18 to 16S ribosomal RNA. The polypeptide is Small ribosomal subunit protein bS6 (Pseudarthrobacter chlorophenolicus (strain ATCC 700700 / DSM 12829 / CIP 107037 / JCM 12360 / KCTC 9906 / NCIMB 13794 / A6) (Arthrobacter chlorophenolicus)).